A 447-amino-acid chain; its full sequence is Phosphoglucosamine mutase (447 aa).

Ser106 (phosphoserine intermediate) is an active-site residue. Ser106, Asp245, Asp247, and Asp249 together coordinate Mg(2+). Phosphoserine is present on Ser106.

The protein belongs to the phosphohexose mutase family. The cofactor is Mg(2+). Activated by phosphorylation.

The catalysed reaction is alpha-D-glucosamine 1-phosphate = D-glucosamine 6-phosphate. Its function is as follows. Catalyzes the conversion of glucosamine-6-phosphate to glucosamine-1-phosphate. This is Phosphoglucosamine mutase from Cupriavidus metallidurans (strain ATCC 43123 / DSM 2839 / NBRC 102507 / CH34) (Ralstonia metallidurans).